A 314-amino-acid polypeptide reads, in one-letter code: tRNA pseudouridine synthase B (314 aa).

His43 lines the substrate pocket. Asp48 functions as the Nucleophile in the catalytic mechanism. Residues Tyr76, Tyr179, and Leu200 each contribute to the substrate site.

This sequence belongs to the pseudouridine synthase TruB family. Type 1 subfamily.

It carries out the reaction uridine(55) in tRNA = pseudouridine(55) in tRNA. Responsible for synthesis of pseudouridine from uracil-55 in the psi GC loop of transfer RNAs. The sequence is that of tRNA pseudouridine synthase B from Escherichia coli O157:H7.